A 42-amino-acid polypeptide reads, in one-letter code: Potassium channel toxin gamma-KTx 1.3 (42 aa).

Intrachain disulfides connect Cys-5–Cys-23, Cys-11–Cys-34, Cys-20–Cys-39, and Cys-24–Cys-41.

It belongs to the ergtoxin family. Gamma-KTx 1 subfamily. As to expression, expressed by the venom gland.

The protein resides in the secreted. Blocks Kv11/ERG potassium channels. The polypeptide is Potassium channel toxin gamma-KTx 1.3 (Centruroides gracilis (Slenderbrown scorpion)).